The following is a 379-amino-acid chain: MKFKLKTTSGTARRGEMTFSRPQGEFTVQTPAFMPVGTYGTVKGMTPEEVRATGAEILLGNTFHLWLRPGQEVMRKHGDLHDFMQWHRPILTDSGGFQVFSLGKLRKITEEGVKFQNPINGERIFLSPEKSMEIQYDLGSDIVMIFDECTPYPATFDYAKKSMEMSLRWAQRSRDRFDELGNKNALFGIVQGGTFEELRKVSAEGLVDIGFDGYAVGGLAVGEPKEEMHRILEFTTPLLPADKPRYLMGVGKPEDLVEGVRRGIDMFDCVMPTRNARNGHLFVTDGIVKIRNAKYRDDTSALDPHCDCYTCRHYTKSYLYHLDKCGEILGARLNTIHNLRYYQRLMEEIRQAIEEDRFDDFVVEFYTRMGKEVPPLQKP.

Catalysis depends on Asp-93, which acts as the Proton acceptor. Substrate-binding positions include Asp-93–Phe-97, Asp-147, Gln-191, and Gly-218. The segment at Gly-249–Asp-255 is RNA binding. The Nucleophile role is filled by Asp-268. The segment at Thr-273–Arg-277 is RNA binding; important for wobble base 34 recognition. Residues Cys-306, Cys-308, Cys-311, and His-337 each contribute to the Zn(2+) site.

This sequence belongs to the queuine tRNA-ribosyltransferase family. As to quaternary structure, homodimer. Within each dimer, one monomer is responsible for RNA recognition and catalysis, while the other monomer binds to the replacement base PreQ1. The cofactor is Zn(2+).

It catalyses the reaction 7-aminomethyl-7-carbaguanine + guanosine(34) in tRNA = 7-aminomethyl-7-carbaguanosine(34) in tRNA + guanine. It participates in tRNA modification; tRNA-queuosine biosynthesis. Its function is as follows. Catalyzes the base-exchange of a guanine (G) residue with the queuine precursor 7-aminomethyl-7-deazaguanine (PreQ1) at position 34 (anticodon wobble position) in tRNAs with GU(N) anticodons (tRNA-Asp, -Asn, -His and -Tyr). Catalysis occurs through a double-displacement mechanism. The nucleophile active site attacks the C1' of nucleotide 34 to detach the guanine base from the RNA, forming a covalent enzyme-RNA intermediate. The proton acceptor active site deprotonates the incoming PreQ1, allowing a nucleophilic attack on the C1' of the ribose to form the product. After dissociation, two additional enzymatic reactions on the tRNA convert PreQ1 to queuine (Q), resulting in the hypermodified nucleoside queuosine (7-(((4,5-cis-dihydroxy-2-cyclopenten-1-yl)amino)methyl)-7-deazaguanosine). This is Queuine tRNA-ribosyltransferase from Actinobacillus succinogenes (strain ATCC 55618 / DSM 22257 / CCUG 43843 / 130Z).